The sequence spans 426 residues: UDP-N-acetylglucosamine 1-carboxyvinyltransferase (426 aa).

22 to 23 is a binding site for phosphoenolpyruvate; that stretch reads KN. R99 is a binding site for UDP-N-acetyl-alpha-D-glucosamine. Catalysis depends on C123, which acts as the Proton donor. C123 bears the 2-(S-cysteinyl)pyruvic acid O-phosphothioketal mark. Residues 128-132, D313, and I335 each bind UDP-N-acetyl-alpha-D-glucosamine; that span reads RPIDL.

The protein belongs to the EPSP synthase family. MurA subfamily.

It is found in the cytoplasm. It catalyses the reaction phosphoenolpyruvate + UDP-N-acetyl-alpha-D-glucosamine = UDP-N-acetyl-3-O-(1-carboxyvinyl)-alpha-D-glucosamine + phosphate. The protein operates within cell wall biogenesis; peptidoglycan biosynthesis. In terms of biological role, cell wall formation. Adds enolpyruvyl to UDP-N-acetylglucosamine. The protein is UDP-N-acetylglucosamine 1-carboxyvinyltransferase of Zymomonas mobilis subsp. mobilis (strain ATCC 31821 / ZM4 / CP4).